The following is a 450-amino-acid chain: METKPPIPLAVLVGIQTPDVDDIAHEASLAELGRLVKTLGYAVVGTVSQKREGTGAALLLGSGKLAELAALTGGTGVVTSMAPPPKSKARQRFEGAAEGAAPPEPDPDAARRPEFVIVDHELSPSQIRNLERATGAQVLDRTGVIVEIFHRHANTREARLQVEMARLKYVAPRLRESSGGGGRQQGPGAGESTLALDRRKIRDRLAELKTQLDAVQRDGDQRRSARRDQLRVALVGYTNAGKSSLMRALTGSQVLVEDKLFATLDTTVRILQPETRPRILVSDTVGFIKQLPHDLVASFRSTLAEALEASLLLFVVDASDPTYESQLEVTRGVLREIGADAVPSRLVLNKMDRLDPAARAALRDKHPDAIMLSAHAPGDVSALRDTLIAFFEAEMVEDTLVLPYAKQGLIGEIYESARVLSEDHDETGRVLKVRALPAAITRLKRSLAAR.

Disordered regions lie at residues T79 to A110 and R173 to L196. Positions S178–A189 are enriched in gly residues. In terms of domain architecture, Hflx-type G spans L230–M395. Residues G236 to S243, F261 to D265, D283 to G286, N349 to D352, and S373 to H375 contribute to the GTP site. Mg(2+) is bound by residues S243 and T263.

It belongs to the TRAFAC class OBG-HflX-like GTPase superfamily. HflX GTPase family. Monomer. Associates with the 50S ribosomal subunit. The cofactor is Mg(2+).

It is found in the cytoplasm. Its function is as follows. GTPase that associates with the 50S ribosomal subunit and may have a role during protein synthesis or ribosome biogenesis. This chain is GTPase HflX, found in Gluconacetobacter diazotrophicus (strain ATCC 49037 / DSM 5601 / CCUG 37298 / CIP 103539 / LMG 7603 / PAl5).